The primary structure comprises 338 residues: MLARAGEVGRAGPAIRWLGGIGAVIPLLALVLVLVVLVIEAMGAIRLNGLHFFTATEWNPGNTYGETVVTDGVAHPVGAYYGALPLIVGTLATSAIALIIAVPVSVGAALVIVERLPKRLAEAVGIVLELLAGIPSVVVGLWGAMTFGPFIAHHIAPVIAHNAPDVPVLNYLRGDPGNGEGMLVSGLVLAVMVVPIIATTTHDLFRQVPVLPREGAIALGMSNWECVRRVTLPWVSSGIVGAVVLGLGRALGETMAVAMVSGAVLGAMPANIYATMTTIAATIVSQLDSAMTDSTNFAVKTLAEVGLVLMVITLLTNVAARGMVRRVSRTALPVGRGI.

8 helical membrane passes run 19 to 39 (GGIGAVIPLLALVLVLVVLVI), 93 to 113 (TSAIALIIAVPVSVGAALVIV), 123 to 143 (AVGIVLELLAGIPSVVVGLWG), 144 to 164 (AMTFGPFIAHHIAPVIAHNAP), 181 to 201 (GMLVSGLVLAVMVVPIIATTT), 232 to 252 (LPWVSSGIVGAVVLGLGRALG), 254 to 274 (TMAVAMVSGAVLGAMPANIYA), and 295 to 315 (TNFAVKTLAEVGLVLMVITLL). The region spanning 87–320 (IVGTLATSAI…VITLLTNVAA (234 aa)) is the ABC transmembrane type-1 domain.

This sequence belongs to the binding-protein-dependent transport system permease family. CysTW subfamily.

Its subcellular location is the cell membrane. Functionally, part of the binding-protein-dependent transport system for phosphate; probably responsible for the translocation of the substrate across the membrane. The chain is Phosphate transport system permease protein PstC 1 (pstC1) from Mycobacterium bovis (strain ATCC BAA-935 / AF2122/97).